The chain runs to 311 residues: Pyrimidine-specific ribonucleoside hydrolase RihA (311 aa).

Residue His240 is part of the active site.

It belongs to the IUNH family. RihA subfamily.

Hydrolyzes with equal efficiency cytidine or uridine to ribose and cytosine or uracil, respectively. The protein is Pyrimidine-specific ribonucleoside hydrolase RihA of Escherichia coli O45:K1 (strain S88 / ExPEC).